Reading from the N-terminus, the 359-residue chain is tRNA pseudouridine synthase B (359 aa).

D63 functions as the Nucleophile in the catalytic mechanism.

Belongs to the pseudouridine synthase TruB family. Type 1 subfamily.

The catalysed reaction is uridine(55) in tRNA = pseudouridine(55) in tRNA. Responsible for synthesis of pseudouridine from uracil-55 in the psi GC loop of transfer RNAs. The sequence is that of tRNA pseudouridine synthase B from Psychrobacter cryohalolentis (strain ATCC BAA-1226 / DSM 17306 / VKM B-2378 / K5).